A 199-amino-acid chain; its full sequence is Small ribosomal subunit protein uS4 (199 aa).

An S4 RNA-binding domain is found at 94-157 (SRLDNLVYRA…RKLKLVQEAL (64 aa)).

The protein belongs to the universal ribosomal protein uS4 family. As to quaternary structure, part of the 30S ribosomal subunit. Contacts protein S5. The interaction surface between S4 and S5 is involved in control of translational fidelity.

In terms of biological role, one of the primary rRNA binding proteins, it binds directly to 16S rRNA where it nucleates assembly of the body of the 30S subunit. With S5 and S12 plays an important role in translational accuracy. The protein is Small ribosomal subunit protein uS4 of Mycoplasmopsis synoviae (strain 53) (Mycoplasma synoviae).